The sequence spans 638 residues: Acetolactate synthase 1, chloroplastic (638 aa).

Residues 1-19 are compositionally biased toward low complexity; that stretch reads MATAAAASTALTGATTAAP. The segment at 1 to 23 is disordered; the sequence is MATAAAASTALTGATTAAPKARR. A chloroplast-targeting transit peptide spans 1 to 39; the sequence is MATAAAASTALTGATTAAPKARRRAHLLATRRALAAPIR. Glu112 is a thiamine diphosphate binding site. Residues Cys132 and Cys278 are joined by a disulfide bond. Residues Arg214, 320–341, and 363–382 each bind FAD; these read HGTVYANYAVDKADLLLALGVR and DIDPAEIGKNKQPHVSICAD. Positions 455–535 are thiamine pyrophosphate binding; that stretch reads QHQMWAAQYY…VKVFVLNNQH (81 aa). Mg(2+)-binding residues include Asp506 and Asn533.

Belongs to the TPP enzyme family. Requires Mg(2+) as cofactor. The cofactor is thiamine diphosphate.

It is found in the plastid. The protein localises to the chloroplast. The enzyme catalyses 2 pyruvate + H(+) = (2S)-2-acetolactate + CO2. It participates in amino-acid biosynthesis; L-isoleucine biosynthesis; L-isoleucine from 2-oxobutanoate: step 1/4. Its pathway is amino-acid biosynthesis; L-valine biosynthesis; L-valine from pyruvate: step 1/4. The polypeptide is Acetolactate synthase 1, chloroplastic (ALS1) (Zea mays (Maize)).